The sequence spans 100 residues: UPF0045 protein MJ1052 (100 aa).

The protein belongs to the UPF0045 family.

In Methanocaldococcus jannaschii (strain ATCC 43067 / DSM 2661 / JAL-1 / JCM 10045 / NBRC 100440) (Methanococcus jannaschii), this protein is UPF0045 protein MJ1052.